Consider the following 391-residue polypeptide: Phosphoglycerate kinase (391 aa).

Substrate-binding positions include 21–23 (DLN), R36, 59–62 (HLGR), R113, and R146. ATP-binding positions include K197, E319, and 345-348 (GGDT).

The protein belongs to the phosphoglycerate kinase family. Monomer.

It is found in the cytoplasm. The enzyme catalyses (2R)-3-phosphoglycerate + ATP = (2R)-3-phospho-glyceroyl phosphate + ADP. Its pathway is carbohydrate degradation; glycolysis; pyruvate from D-glyceraldehyde 3-phosphate: step 2/5. In Pseudoalteromonas translucida (strain TAC 125), this protein is Phosphoglycerate kinase.